The chain runs to 149 residues: MTKGQRHIKIRELITSHEIETQDDLVDMLREEGYKVTQATVSRDIKELHLVKVPTNNGSYKYSLPADQRFNPLSKLKRSLMDAFVKIDSASHMIVLKTMPGNAQAIGALMDNLEWEEIMGTICGDDTILIICRTPEDTEGVQSRLLELL.

It belongs to the ArgR family.

It is found in the cytoplasm. Its pathway is amino-acid biosynthesis; L-arginine biosynthesis [regulation]. In terms of biological role, regulates arginine biosynthesis genes. This chain is Arginine repressor, found in Bacillus velezensis (strain DSM 23117 / BGSC 10A6 / LMG 26770 / FZB42) (Bacillus amyloliquefaciens subsp. plantarum).